Reading from the N-terminus, the 537-residue chain is Periplasmic murein peptide-binding protein MppA (537 aa).

The first 22 residues, 1 to 22 (MKHSVSVTCCALLVSSISLSYA), serve as a signal peptide directing secretion. Positions 42, 54, 56, 289, 424, 435, 437, 439, and 506 each coordinate L-alanyl-gamma-D-glutamyl-meso-2,6-diaminopimelate.

This sequence belongs to the bacterial solute-binding protein 5 family. The complex is composed of two ATP-binding proteins (OppD and OppF), two transmembrane proteins (OppB and OppC) and a solute-binding protein (MppA).

The protein localises to the periplasm. Part of the ABC transporter complex MppA-OppBCDF involved in the uptake of the cell wall murein tripeptide L-alanyl-gamma-D-glutamyl-meso-diaminopimelate. Is involved in the recycling of cell wall peptides. Binds the cell wall peptide L-Ala-D-Gly-gamma-meso-diaminopimelic acid. Can also transport ordinary alpha-linked tripeptides such as Pro-Phe-Lys, but with much lower efficiency than OppA. Cannot bind typical tripeptides such as Lys-Glu-Lys, Lys-Lys-Lys or Ala-Ala-Ala. The protein is Periplasmic murein peptide-binding protein MppA of Escherichia coli (strain K12).